A 410-amino-acid chain; its full sequence is LL-diaminopimelate aminotransferase (410 aa).

Residues Tyr15 and Gly42 each contribute to the substrate site. Residues Tyr72, 108–109, Tyr132, Asn187, Tyr218, and 246–248 contribute to the pyridoxal 5'-phosphate site; these read SK and SFS. 3 residues coordinate substrate: Lys109, Tyr132, and Asn187. Position 249 is an N6-(pyridoxal phosphate)lysine (Lys249). 2 residues coordinate pyridoxal 5'-phosphate: Arg257 and Asn292. Substrate is bound by residues Asn292 and Arg388.

This sequence belongs to the class-I pyridoxal-phosphate-dependent aminotransferase family. LL-diaminopimelate aminotransferase subfamily. In terms of assembly, homodimer. Requires pyridoxal 5'-phosphate as cofactor.

It carries out the reaction (2S,6S)-2,6-diaminopimelate + 2-oxoglutarate = (S)-2,3,4,5-tetrahydrodipicolinate + L-glutamate + H2O + H(+). It participates in amino-acid biosynthesis; L-lysine biosynthesis via DAP pathway; LL-2,6-diaminopimelate from (S)-tetrahydrodipicolinate (aminotransferase route): step 1/1. Involved in the synthesis of meso-diaminopimelate (m-DAP or DL-DAP), required for both lysine and peptidoglycan biosynthesis. Catalyzes the direct conversion of tetrahydrodipicolinate to LL-diaminopimelate. This chain is LL-diaminopimelate aminotransferase, found in Geobacter metallireducens (strain ATCC 53774 / DSM 7210 / GS-15).